We begin with the raw amino-acid sequence, 666 residues long: Probable potassium transport system protein Kup (666 aa).

The next 12 membrane-spanning stretches (helical) occupy residues 16 to 36 (GFII…LYTM), 58 to 78 (ISLI…LVAL), 99 to 119 (TPWL…DGAL), 141 to 161 (IFQN…LLFA), 167 to 187 (TGVI…FLGI), 221 to 241 (IFIL…YSDL), 253 to 273 (WPFV…WILA), 292 to 312 (FTMH…QALI), 343 to 363 (TYIP…VLLF), 373 to 393 (YGLA…FFLI), 402 to 422 (VLLM…ASAV), and 424 to 444 (FMHG…IMTI).

This sequence belongs to the HAK/KUP transporter (TC 2.A.72) family.

Its subcellular location is the cell membrane. The catalysed reaction is K(+)(in) + H(+)(in) = K(+)(out) + H(+)(out). Transport of potassium into the cell. Likely operates as a K(+):H(+) symporter. In Streptococcus agalactiae serotype Ia (strain ATCC 27591 / A909 / CDC SS700), this protein is Probable potassium transport system protein Kup.